The sequence spans 542 residues: Delta 8-(E)-sphingolipid desaturase (542 aa).

The 75-residue stretch at 1 to 75 (MVVSREEVRE…FKRWSIGRVK (75 aa)) folds into the Cytochrome b5 heme-binding domain. Heme is bound by residues His35 and His58. 2 consecutive transmembrane segments (helical) span residues 215–235 (WYTLSAISIGLMWQQLVFIAH) and 248–268 (IDNIIGIIIANFIGGLSLGWW). Positions 235–239 (HDAGH) match the Histidine box-1 motif. Residues 272–276 (HNVHH) carry the Histidine box-2 motif. Transmembrane regions (helical) follow at residues 329-346 (LYYPILSFGRFNLYRLSW), 360-380 (AAWFRYLELIGLCFFSYWFFY), and 393-413 (FWFLLISHWTTMIVHVQIVLS). The Histidine box-3 signature appears at 455–459 (QAIHH).

It belongs to the fatty acid desaturase type 1 family.

It is found in the membrane. It carries out the reaction an N-acylsphing-4-enine + 2 Fe(II)-[cytochrome b5] + O2 + 2 H(+) = a (4E,8E)-4-sphinga-4,8-dienine ceramide + 2 Fe(III)-[cytochrome b5] + 2 H2O. It participates in lipid metabolism; sphingolipid metabolism. In terms of biological role, delta(8)-fatty-acid desaturase which introduces a double bond at the 8-position in the long-chain base (LCB) of ceramides. Required for the formation of the di-unsaturated sphingoid base (E,E)-sphinga-4,8-dienine during glucosylceramide (GluCer) biosynthesis. The sequence is that of Delta 8-(E)-sphingolipid desaturase from Komagataella phaffii (strain GS115 / ATCC 20864) (Yeast).